Here is a 418-residue protein sequence, read N- to C-terminus: Voltage-gated ClC-type chloride channel ClcB (418 aa).

The next 10 helical transmembrane spans lie at 5–25 (LLIA…FRHA), 54–74 (LLTP…WQKF), 146–166 (LWIA…PLAG), 168–188 (LFIA…PVII), 222–242 (ALII…LTLM), 258–278 (WQLA…PAVW), 291–311 (APPL…AVLA), 316–336 (GAPG…GMLY), 352–372 (LLLG…APIM), and 380–400 (MTGE…ASVI).

The protein belongs to the chloride channel (TC 2.A.49) family. ClcB subfamily.

It is found in the cell inner membrane. In terms of biological role, probably acts as an electrical shunt for an outwardly-directed proton pump that is linked to amino acid decarboxylation, as part of the extreme acid resistance (XAR) response. The chain is Voltage-gated ClC-type chloride channel ClcB from Escherichia coli O127:H6 (strain E2348/69 / EPEC).